A 274-amino-acid polypeptide reads, in one-letter code: Putative phosphoenolpyruvate synthase regulatory protein (274 aa).

155–162 contacts ADP; that stretch reads GVSRSGKT.

This sequence belongs to the pyruvate, phosphate/water dikinase regulatory protein family. PSRP subfamily.

The enzyme catalyses [pyruvate, water dikinase] + ADP = [pyruvate, water dikinase]-phosphate + AMP + H(+). It carries out the reaction [pyruvate, water dikinase]-phosphate + phosphate + H(+) = [pyruvate, water dikinase] + diphosphate. Functionally, bifunctional serine/threonine kinase and phosphorylase involved in the regulation of the phosphoenolpyruvate synthase (PEPS) by catalyzing its phosphorylation/dephosphorylation. The chain is Putative phosphoenolpyruvate synthase regulatory protein from Laribacter hongkongensis (strain HLHK9).